We begin with the raw amino-acid sequence, 181 residues long: ATP synthase subunit b, chloroplastic (181 aa).

A helical membrane pass occupies residues 28–50 (IINLSVVLGVLIYFGKGVLSNLL).

Belongs to the ATPase B chain family. In terms of assembly, F-type ATPases have 2 components, F(1) - the catalytic core - and F(0) - the membrane proton channel. F(1) has five subunits: alpha(3), beta(3), gamma(1), delta(1), epsilon(1). F(0) has four main subunits: a(1), b(1), b'(1) and c(10-14). The alpha and beta chains form an alternating ring which encloses part of the gamma chain. F(1) is attached to F(0) by a central stalk formed by the gamma and epsilon chains, while a peripheral stalk is formed by the delta, b and b' chains.

The protein localises to the plastid. The protein resides in the chloroplast thylakoid membrane. Its function is as follows. F(1)F(0) ATP synthase produces ATP from ADP in the presence of a proton or sodium gradient. F-type ATPases consist of two structural domains, F(1) containing the extramembraneous catalytic core and F(0) containing the membrane proton channel, linked together by a central stalk and a peripheral stalk. During catalysis, ATP synthesis in the catalytic domain of F(1) is coupled via a rotary mechanism of the central stalk subunits to proton translocation. In terms of biological role, component of the F(0) channel, it forms part of the peripheral stalk, linking F(1) to F(0). This Cryptomeria japonica (Japanese cedar) protein is ATP synthase subunit b, chloroplastic.